We begin with the raw amino-acid sequence, 858 residues long: Leucine--tRNA ligase (858 aa).

The 'HIGH' region signature appears at 42 to 52 (PYPSGRLHMGH). Positions 618–622 (KMSKS) match the 'KMSKS' region motif. Residue Lys-621 coordinates ATP.

The protein belongs to the class-I aminoacyl-tRNA synthetase family.

Its subcellular location is the cytoplasm. It catalyses the reaction tRNA(Leu) + L-leucine + ATP = L-leucyl-tRNA(Leu) + AMP + diphosphate. The polypeptide is Leucine--tRNA ligase (Vibrio atlanticus (strain LGP32) (Vibrio splendidus (strain Mel32))).